A 147-amino-acid polypeptide reads, in one-letter code: Deoxyuridine 5'-triphosphate nucleotidohydrolase (147 aa).

Residues Arg-68 to Gly-70, Asn-81, and Thr-85 to Asp-87 contribute to the substrate site.

It belongs to the dUTPase family. Mg(2+) serves as cofactor.

The enzyme catalyses dUTP + H2O = dUMP + diphosphate + H(+). The protein operates within pyrimidine metabolism; dUMP biosynthesis; dUMP from dCTP (dUTP route): step 2/2. This enzyme is involved in nucleotide metabolism: it produces dUMP, the immediate precursor of thymidine nucleotides and it decreases the intracellular concentration of dUTP so that uracil cannot be incorporated into DNA. The chain is Deoxyuridine 5'-triphosphate nucleotidohydrolase from Solibacter usitatus (strain Ellin6076).